The primary structure comprises 633 residues: Glutamyl-tRNA(Gln) amidotransferase subunit E (633 aa).

Residues 414 to 437 are disordered; the sequence is ALPDGNTEYMRPLPGKARMYPETD.

This sequence belongs to the GatB/GatE family. GatE subfamily. Heterodimer of GatD and GatE.

It carries out the reaction L-glutamyl-tRNA(Gln) + L-glutamine + ATP + H2O = L-glutaminyl-tRNA(Gln) + L-glutamate + ADP + phosphate + H(+). Its function is as follows. Allows the formation of correctly charged Gln-tRNA(Gln) through the transamidation of misacylated Glu-tRNA(Gln) in organisms which lack glutaminyl-tRNA synthetase. The reaction takes place in the presence of glutamine and ATP through an activated gamma-phospho-Glu-tRNA(Gln). The GatDE system is specific for glutamate and does not act on aspartate. In Pyrococcus abyssi (strain GE5 / Orsay), this protein is Glutamyl-tRNA(Gln) amidotransferase subunit E.